A 252-amino-acid chain; its full sequence is 2-succinyl-6-hydroxy-2,4-cyclohexadiene-1-carboxylate synthase (252 aa).

It belongs to the AB hydrolase superfamily. MenH family. In terms of assembly, monomer.

It carries out the reaction 5-enolpyruvoyl-6-hydroxy-2-succinyl-cyclohex-3-ene-1-carboxylate = (1R,6R)-6-hydroxy-2-succinyl-cyclohexa-2,4-diene-1-carboxylate + pyruvate. It participates in quinol/quinone metabolism; 1,4-dihydroxy-2-naphthoate biosynthesis; 1,4-dihydroxy-2-naphthoate from chorismate: step 3/7. The protein operates within quinol/quinone metabolism; menaquinone biosynthesis. Functionally, catalyzes a proton abstraction reaction that results in 2,5-elimination of pyruvate from 2-succinyl-5-enolpyruvyl-6-hydroxy-3-cyclohexene-1-carboxylate (SEPHCHC) and the formation of 2-succinyl-6-hydroxy-2,4-cyclohexadiene-1-carboxylate (SHCHC). In Klebsiella pneumoniae (strain 342), this protein is 2-succinyl-6-hydroxy-2,4-cyclohexadiene-1-carboxylate synthase.